Reading from the N-terminus, the 198-residue chain is Peptidyl-tRNA hydrolase (198 aa).

A tRNA-binding site is contributed by tyrosine 15. Catalysis depends on histidine 20, which acts as the Proton acceptor. Phenylalanine 65, asparagine 67, and asparagine 113 together coordinate tRNA.

Belongs to the PTH family. As to quaternary structure, monomer.

It localises to the cytoplasm. It carries out the reaction an N-acyl-L-alpha-aminoacyl-tRNA + H2O = an N-acyl-L-amino acid + a tRNA + H(+). In terms of biological role, hydrolyzes ribosome-free peptidyl-tRNAs (with 1 or more amino acids incorporated), which drop off the ribosome during protein synthesis, or as a result of ribosome stalling. Functionally, catalyzes the release of premature peptidyl moieties from peptidyl-tRNA molecules trapped in stalled 50S ribosomal subunits, and thus maintains levels of free tRNAs and 50S ribosomes. The sequence is that of Peptidyl-tRNA hydrolase from Ehrlichia chaffeensis (strain ATCC CRL-10679 / Arkansas).